Here is a 521-residue protein sequence, read N- to C-terminus: Bifunctional purine biosynthesis protein PurH (521 aa).

Residues 1-145 (MIKQALISVS…KNHRDVTVVV (145 aa)) enclose the MGS-like domain.

This sequence belongs to the PurH family.

The catalysed reaction is (6R)-10-formyltetrahydrofolate + 5-amino-1-(5-phospho-beta-D-ribosyl)imidazole-4-carboxamide = 5-formamido-1-(5-phospho-D-ribosyl)imidazole-4-carboxamide + (6S)-5,6,7,8-tetrahydrofolate. It catalyses the reaction IMP + H2O = 5-formamido-1-(5-phospho-D-ribosyl)imidazole-4-carboxamide. It functions in the pathway purine metabolism; IMP biosynthesis via de novo pathway; 5-formamido-1-(5-phospho-D-ribosyl)imidazole-4-carboxamide from 5-amino-1-(5-phospho-D-ribosyl)imidazole-4-carboxamide (10-formyl THF route): step 1/1. The protein operates within purine metabolism; IMP biosynthesis via de novo pathway; IMP from 5-formamido-1-(5-phospho-D-ribosyl)imidazole-4-carboxamide: step 1/1. The protein is Bifunctional purine biosynthesis protein PurH of Paraburkholderia phytofirmans (strain DSM 17436 / LMG 22146 / PsJN) (Burkholderia phytofirmans).